The chain runs to 209 residues: N-(5'-phosphoribosyl)anthranilate isomerase (209 aa).

It belongs to the TrpF family.

The enzyme catalyses N-(5-phospho-beta-D-ribosyl)anthranilate = 1-(2-carboxyphenylamino)-1-deoxy-D-ribulose 5-phosphate. It participates in amino-acid biosynthesis; L-tryptophan biosynthesis; L-tryptophan from chorismate: step 3/5. This chain is N-(5'-phosphoribosyl)anthranilate isomerase, found in Granulibacter bethesdensis (strain ATCC BAA-1260 / CGDNIH1).